Reading from the N-terminus, the 304-residue chain is E3 ubiquitin-protein ligase CHIP (304 aa).

A compositionally biased stretch (basic and acidic residues) spans 1 to 10 (MKGKEEKEGG). Residues 1 to 30 (MKGKEEKEGGARLGTGGGGSPDKSPSAQEL) are disordered. Residue Lys-2 forms a Glycyl lysine isopeptide (Lys-Gly) (interchain with G-Cter in ubiquitin) linkage. The span at 11–20 (ARLGTGGGGS) shows a compositional bias: gly residues. Residue Ser-20 is modified to Phosphoserine. A Glycyl lysine isopeptide (Lys-Gly) (interchain with G-Cter in ubiquitin) cross-link involves residue Lys-23. 2 positions are modified to phosphoserine: Ser-24 and Ser-26. TPR repeat units lie at residues 27–60 (AQEL…NPLV), 61–94 (AVYY…DGQS), and 96–128 (KAHF…AKEQ). The tract at residues 102 to 201 (GQCQLEMESY…GHIRAQQACI (100 aa)) is required for interaction with MAPK7. The required for interaction with and ubiquitination of MYOCD stretch occupies residues 143-197 (AKKKRWNSIEERRIHQESELHSYLTRLIAAERERELEECQRNHEGDEDDGHIRAQ). The segment at 144 to 198 (KKKRWNSIEERRIHQESELHSYLTRLIAAERERELEECQRNHEGDEDDGHIRAQQ) is required for interaction with FOXO1. The tract at residues 144-304 (KKKRWNSIEE…ISENGWVEDY (161 aa)) is required for ubiquitination of FOXO1. Residue Ser-150 is modified to Phosphoserine. Glycyl lysine isopeptide (Lys-Gly) (interchain with G-Cter in ubiquitin) cross-links involve residues Lys-222 and Lys-256. The U-box domain occupies 227-301 (DIPDYLCGKI…DAFISENGWV (75 aa)). Phosphoserine is present on Ser-274.

Homodimer. Interacts with BAG2, and with the E2 ubiquitin conjugating enzymes UBE2D1, UBE2D2 and UBE2D3. Detected in a ternary complex containing STUB1, HSPA1A and HSPBP1. Part of a complex composed of STUB1/CHIP, VCP/p97, CHRNA3, and UBXN2A that modulates the ubiquitination and endoplasmic reticulum-associated degradation (ERAD) of CHRNA3. Within the complex UBXN2A acts as a scaffold protein required for the interaction of CHRNA3 with VCP/p97, this interaction also inhibits CHRNA3 ubiquitination by STUB1/CHIP and subsequently ERAD. Interacts with MKKS. Interacts with DNAAF4. Interacts (via the U-box domain) with the UBE2V2-UBE2N heterodimer; the complex has a specific 'Lys-63'-linked polyubiquitination activity. Interacts (when monoubiquitinated) with ATXN3. Interacts with UBE2W. Interacts with DNAJB6. Interacts with FLCN and HSP90AA1. Interacts with HSP90. Interacts with UBE2N and UBE2V1. Interacts (via TPR repeats) with HSPA8 (via C-terminus). Interacts (via TPR repeats) with HSPA1A (via C-terminus). Interacts with the non-acetylated form of HSPA1A and HSPA1B. Interacts with SMAD3 and HSP90AB1. Interacts with UBE4B. Interacts with PRMT5. Interacts with MYOCD (via C-terminus). Interacts with FOXO1 (when phosphorylated on 'Ser-250'). Interacts with MAPK7/ERK5; the interaction is enhanced in the presence of IGF1 or MAP2K5 and promotes STUB1/CHIP E3 ligase activity. Interacts with and ubiquitinates ESR1; the interaction is promoted in the absence of estradiol (17-beta-estradiol/E2). Interacts with ESR2. Interacts with and ubiquitinates NFATC3; HSPA1A/HSP70 is required as a co-chaperone. In macrophages, interacts with PAQR3; the interaction promotes PPARG poylubiquitination and STUB1-mediated degradation. Component of the chaperone-assisted selective autophagy (CASA) complex consisting of BAG3, HSPA8/HSC70, HSPB8 and STUB1/CHIP. Post-translationally, auto-ubiquitinated; mediated by UBE2D1 and UBE2D2 and enhanced in the presence of MAP2K5. Monoubiquitinated at Lys-2 following cell stress by UBE2W, promoting the interaction with ATXN3. In terms of tissue distribution, expressed in the adventitia layer of the carotid artery (at protein level). Expressed in the CA1 region of the hippocampus (at protein level). Expressed in the uterus (at protein level).

The protein resides in the cytoplasm. Its subcellular location is the nucleus. The protein localises to the mitochondrion. The catalysed reaction is S-ubiquitinyl-[E2 ubiquitin-conjugating enzyme]-L-cysteine + [acceptor protein]-L-lysine = [E2 ubiquitin-conjugating enzyme]-L-cysteine + N(6)-ubiquitinyl-[acceptor protein]-L-lysine.. It functions in the pathway protein modification; protein ubiquitination. In terms of biological role, E3 ubiquitin-protein ligase which targets misfolded chaperone substrates towards proteasomal degradation. Plays a role in the maintenance of mitochondrial morphology and promotes mitophagic removal of dysfunctional mitochondria; thereby acts as a protector against apoptosis in response to cellular stress. Negatively regulates vascular smooth muscle contraction, via degradation of the transcriptional activator MYOCD and subsequent loss of transcription of genes involved in vascular smooth muscle contraction. Promotes survival and proliferation of cardiac smooth muscle cells via ubiquitination and degradation of FOXO1, resulting in subsequent repression of FOXO1-mediated transcription of pro-apoptotic genes. Ubiquitinates ICER-type isoforms of CREM and targets them for proteasomal degradation, thereby acts as a positive effector of MAPK/ERK-mediated inhibition of apoptosis in cardiomyocytes. Inhibits lipopolysaccharide-induced apoptosis and hypertrophy in cardiomyocytes, via ubiquitination and subsequent proteasomal degradation of NFATC3. Collaborates with ATXN3 in the degradation of misfolded chaperone substrates: ATXN3 restricting the length of ubiquitin chain attached to STUB1/CHIP substrates and preventing further chain extension. Ubiquitinates NOS1 in concert with Hsp70 and Hsp40. Modulates the activity of several chaperone complexes, including Hsp70, Hsc70 and Hsp90. Ubiquitinates CHRNA3 targeting it for endoplasmic reticulum-associated degradation in cortical neurons, as part of the STUB1-VCP-UBXN2A complex. Ubiquitinates and promotes ESR1 proteasomal degradation in response to age-related circulating estradiol (17-beta-estradiol/E2) decline, thereby promotes neuronal apoptosis in response to ischemic reperfusion injury. Mediates transfer of non-canonical short ubiquitin chains to HSPA8 that have no effect on HSPA8 degradation. Mediates polyubiquitination of DNA polymerase beta (POLB) at 'Lys-41', 'Lys-61' and 'Lys-81', thereby playing a role in base-excision repair: catalyzes polyubiquitination by amplifying the HUWE1/ARF-BP1-dependent monoubiquitination and leading to POLB-degradation by the proteasome. Mediates polyubiquitination of CYP3A4. Ubiquitinates EPHA2 and may regulate the receptor stability and activity through proteasomal degradation. Acts as a co-chaperone for HSPA1A and HSPA1B chaperone proteins and promotes ubiquitin-mediated protein degradation. Negatively regulates the suppressive function of regulatory T-cells (Treg) during inflammation by mediating the ubiquitination and degradation of FOXP3 in a HSPA1A/B-dependent manner. Catalyzes monoubiquitination of SIRT6, preventing its degradation by the proteasome. Likely mediates polyubiquitination and down-regulates plasma membrane expression of PD-L1/CD274, an immune inhibitory ligand critical for immune tolerance to self and antitumor immunity. Negatively regulates TGF-beta signaling by modulating the basal level of SMAD3 via ubiquitin-mediated degradation. Plays a role in the degradation of TP53. Mediates ubiquitination of RIPK3 leading to its subsequent proteasome-dependent degradation. May regulate myosin assembly in striated muscles together with UBE4B and VCP/p97 by targeting myosin chaperone UNC45B for proteasomal degradation. Ubiquitinates PPARG in macrophages playing a role in M2 macrophages polarization and angiogenesis. The protein is E3 ubiquitin-protein ligase CHIP of Rattus norvegicus (Rat).